The following is a 72-amino-acid chain: DNA-directed RNA polymerase subunit epsilon (72 aa).

This sequence belongs to the RNA polymerase subunit epsilon family. RNAP is composed of a core of 2 alpha, a beta and a beta' subunit. The core is associated with a delta subunit, and at least one of epsilon or omega. When a sigma factor is associated with the core the holoenzyme is formed, which can initiate transcription.

The catalysed reaction is RNA(n) + a ribonucleoside 5'-triphosphate = RNA(n+1) + diphosphate. Its function is as follows. A non-essential component of RNA polymerase (RNAP). In Levilactobacillus brevis (strain ATCC 367 / BCRC 12310 / CIP 105137 / JCM 1170 / LMG 11437 / NCIMB 947 / NCTC 947) (Lactobacillus brevis), this protein is DNA-directed RNA polymerase subunit epsilon.